Here is a 109-residue protein sequence, read N- to C-terminus: uncharacterized protein (109 aa).

The protein to A.calcoaceticus putative ferredoxin.

This is an uncharacterized protein from Escherichia coli O157:H7.